The primary structure comprises 128 residues: Small ribosomal subunit protein uS11 (128 aa).

It belongs to the universal ribosomal protein uS11 family. Part of the 30S ribosomal subunit. Interacts with proteins S7 and S18. Binds to IF-3.

In terms of biological role, located on the platform of the 30S subunit, it bridges several disparate RNA helices of the 16S rRNA. Forms part of the Shine-Dalgarno cleft in the 70S ribosome. The sequence is that of Small ribosomal subunit protein uS11 from Aster yellows witches'-broom phytoplasma (strain AYWB).